Here is a 372-residue protein sequence, read N- to C-terminus: Tubby-like F-box protein 9 (372 aa).

A disordered region spans residues 1-51 (MALWRCSSSWLSSVSRSSGGVGGGESKVSPEIAPVSGGEGEGEEEEGEEER). The span at 7 to 18 (SSSWLSSVSRSS) shows a compositional bias: low complexity. A compositionally biased stretch (acidic residues) spans 40–49 (GEGEEEEGEE). In terms of domain architecture, F-box spans 50–105 (ERWSRLLPELLTEIMRRVDAGAERWPPRRDVVACACVCRRWRDAAVSVVRPPLECG).

It belongs to the TUB family. As to expression, ubiquitous.

In Oryza sativa subsp. japonica (Rice), this protein is Tubby-like F-box protein 9 (TULP9).